Consider the following 926-residue polypeptide: Thyroid peroxidase (926 aa).

Positions 1 to 14 are cleaved as a signal peptide; the sequence is MGARAVLGVTLAVA. Topologically, residues 19–844 are extracellular; that stretch reads FFASILRRKD…TCVDAGRLPR (826 aa). Asparagine 129 carries an N-linked (GlcNAc...) asparagine glycan. Cysteine 142 and cysteine 158 are oxidised to a cystine. Aspartate 238 serves as a coordination point for heme b. Residue histidine 239 is the Proton acceptor of the active site. Position 240 (aspartate 240) interacts with Ca(2+). 2 disulfide bridges follow: cysteine 259-cysteine 269 and cysteine 263-cysteine 286. Asparagine 277 and asparagine 307 each carry an N-linked (GlcNAc...) asparagine glycan. 4 residues coordinate Ca(2+): threonine 321, phenylalanine 323, aspartate 325, and serine 327. An N-linked (GlcNAc...) asparagine glycan is attached at asparagine 342. Heme b is bound by residues glutamate 398 and histidine 493. Disulfide bonds link cysteine 596-cysteine 653, cysteine 694-cysteine 719, cysteine 740-cysteine 780, cysteine 766-cysteine 792, cysteine 798-cysteine 812, cysteine 806-cysteine 821, and cysteine 823-cysteine 836. Positions 738 to 793 constitute a Sushi domain; sequence DACGFPDPVEDGGFLLCEERGQRVLVFSCRHGFRLRGPAQITCTPRGWDSPPPLCK. The region spanning 794-837 is the EGF-like; calcium-binding domain; sequence DINECEDETDPPCHASARCKNTKGGVLCECSDPLVLGEDGRTCV. The helical transmembrane segment at 845-869 threads the bilayer; it reads ASVVSIALGAVLVCGLAGLAWTVVC. Residues 870-926 are Cytoplasmic-facing; that stretch reads RWTHADARPLLPVGEGEGDGKSPSLPLPGCGNRRDVGAAPALEVEQDLSCGSRGLCE.

It belongs to the peroxidase family. XPO subfamily. In terms of assembly, interacts with DUOX1, DUOX2 and CYBA. Requires Ca(2+) as cofactor. The cofactor is heme b. In terms of processing, heme is covalently bound through a H(2)O(2)-dependent autocatalytic process. Heme insertion is important for the delivery of protein at the cell surface. Post-translationally, cleaved in its N-terminal part. N-glycosylated; contains mannose and N-acetylglucosamine.

It localises to the membrane. The catalysed reaction is 2 iodide + H2O2 + 2 H(+) = diiodine + 2 H2O. It carries out the reaction [thyroglobulin]-L-tyrosine + iodide + H2O2 + H(+) = [thyroglobulin]-3-iodo-L-tyrosine + 2 H2O. The enzyme catalyses [thyroglobulin]-3-iodo-L-tyrosine + iodide + H2O2 + H(+) = [thyroglobulin]-3,5-diiodo-L-tyrosine + 2 H2O. It catalyses the reaction 2 [thyroglobulin]-3,5-diiodo-L-tyrosine + H2O2 = [thyroglobulin]-L-thyroxine + [thyroglobulin]-dehydroalanine + 2 H2O. The catalysed reaction is [thyroglobulin]-3-iodo-L-tyrosine + [thyroglobulin]-3,5-diiodo-L-tyrosine + H2O2 = [thyroglobulin]-3,3',5-triiodo-L-thyronine + [thyroglobulin]-dehydroalanine + 2 H2O. It functions in the pathway hormone biosynthesis; thyroid hormone biosynthesis. Functionally, iodination and coupling of the hormonogenic tyrosines in thyroglobulin to yield the thyroid hormones T(3) and T(4). The sequence is that of Thyroid peroxidase (TPO) from Sus scrofa (Pig).